The chain runs to 74 residues: Serine rich endogenous peptide 16 (74 aa).

The N-terminal stretch at 1–31 (MATKISHLVSLLLSLLLLLLFISSQVGFTEA) is a signal peptide. Residues 29–74 (TEAKRDERKKMSSPPIPSPLIPSPPIPPPPPRFYVPPSKSRRGKGP) are disordered. The segment covering 42 to 62 (PPIPSPLIPSPPIPPPPPRFY) has biased composition (pro residues). The SCOOP motif signature appears at 60–74 (RFYVPPSKSRRGKGP). Residues 66–68 (SKS) carry the SxS motif essential for MIK2 binding motif.

This sequence belongs to the serine rich endogenous peptide (SCOOP) phytocytokine family. As to quaternary structure, interacts with MIK2 (via extracellular leucine-rich repeat domain); this interaction triggers the formation of complex between MIK2 and the BAK1/SERK3 and SERK4 coreceptors, and subsequent BAK1 activation by phosphorylation.

Its subcellular location is the cell membrane. It localises to the secreted. The protein resides in the extracellular space. It is found in the apoplast. Its function is as follows. Brassicaceae-specific phytocytokine (plant endogenous peptide released into the apoplast) perceived by MIK2 in a BAK1/SERK3 and SERK4 coreceptors-dependent manner, that modulates various physiological and antimicrobial processes including growth prevention and reactive oxygen species (ROS) response regulation. This Arabidopsis thaliana (Mouse-ear cress) protein is Serine rich endogenous peptide 16.